Here is an 869-residue protein sequence, read N- to C-terminus: TATA box-binding protein-associated factor RNA polymerase I subunit C (869 aa).

2 disordered regions span residues 605-629 (SSLRRDAGPPGDTQPDCHAPTASWT) and 729-869 (GAAW…RMGF). Residue Thr834 is modified to Phosphothreonine. Residues 835 to 860 (PPHSQASSVRATRSQQHTPVLSSSQP) show a composition bias toward polar residues. Ser848 is subject to Phosphoserine.

As to quaternary structure, component of the transcription factor SL1/TIF-IB complex, composed of TBP and at least TAF1A, TAF1B, TAF1C and TAF1D. In the complex interacts directly with TBP, TAF1A and TAF1B. Interaction of the SL1/TIF-IB subunits with TBP excludes interaction of TBP with the transcription factor IID (TFIID) subunits. Interacts with MYC and RRN3. Interacts with p53/TP53; the interaction prevents the association of SL1/TIF-IB with UBTF and represses RNA polymerase I transcription. Part of Pol I pre-initiation complex (PIC), in which Pol I core assembles with RRN3 and promoter-bound UTBF and SL1/TIF-IB complex.

It is found in the nucleus. The protein resides in the nucleolus. Its function is as follows. Component of the transcription factor SL1/TIF-IB complex, which is involved in the assembly of the PIC (pre-initiation complex) during RNA polymerase I-dependent transcription. The rate of PIC formation probably is primarily dependent on the rate of association of SL1/TIF-IB with the rDNA promoter. SL1/TIF-IB is involved in stabilization of nucleolar transcription factor 1/UBTF on rDNA. Formation of SL1/TIF-IB excludes the association of TBP with TFIID subunits. Recruits RNA polymerase I to the rRNA gene promoter via interaction with RRN3. This Homo sapiens (Human) protein is TATA box-binding protein-associated factor RNA polymerase I subunit C (TAF1C).